Reading from the N-terminus, the 525-residue chain is NAD(P)H-quinone oxidoreductase chain 4-2 (525 aa).

Helical transmembrane passes span 6-26, 36-56, 91-111, 115-135, 137-157, 169-189, 212-232, 243-263, 277-297, 314-334, 335-355, 375-397, 417-437, and 464-484; these read FPWL…IPII, WYAL…FYTS, LIIL…PVTL, LFYF…AVQD, LLFF…LAIW, FILY…TMAF, LLLY…IPLH, TAPA…YALI, FAPV…LTSF, MGFV…GAVL, QMVS…ATYD, IFAM…GFVA, VIVV…LLSM, and VFVI…PKLL.

This sequence belongs to the complex I subunit 4 family.

The protein localises to the cellular thylakoid membrane. The enzyme catalyses a plastoquinone + NADH + (n+1) H(+)(in) = a plastoquinol + NAD(+) + n H(+)(out). It catalyses the reaction a plastoquinone + NADPH + (n+1) H(+)(in) = a plastoquinol + NADP(+) + n H(+)(out). In terms of biological role, NDH-1 shuttles electrons from NAD(P)H, via FMN and iron-sulfur (Fe-S) centers, to quinones in the respiratory chain. The immediate electron acceptor for the enzyme in this species is believed to be plastoquinone. Couples the redox reaction to proton translocation (for every two electrons transferred, four hydrogen ions are translocated across the cytoplasmic membrane), and thus conserves the redox energy in a proton gradient. The sequence is that of NAD(P)H-quinone oxidoreductase chain 4-2 (ndhD2) from Nostoc sp. (strain PCC 7120 / SAG 25.82 / UTEX 2576).